The primary structure comprises 251 residues: MASLQHTTASLHSKHIPKTTNILTRKPILNLSSSTFYSPKLKLKLKLPLTKTRRSTGGALGARMSSLAAGSYAAALADLANSNNTLDAITADFDKIEQLFSDPKVFDYFSSPIVEDSTKRQLIGEFATTSGFQPHTHNFLNVLIDSKRIDMIIDIIKEFEFVYNTLTDTELVVVTSVVKLESHHLAQIAKQVQKLTGAKKVRTKTLLDPSLVAGFTVRYGNTGSKFIDMSVKRKLEEIAAQIDLGDIQLAV.

The transit peptide at 1–64 (MASLQHTTAS…STGGALGARM (64 aa)) directs the protein to the chloroplast.

This sequence belongs to the ATPase delta chain family. F-type ATPases have 2 components, CF(1) - the catalytic core - and CF(0) - the membrane proton channel. CF(1) has five subunits: alpha(3), beta(3), gamma(1), delta(1), epsilon(1). CF(0) has three main subunits: a, b and c.

Its subcellular location is the plastid. The protein resides in the chloroplast thylakoid membrane. Functionally, this protein seems to be part of the stalk that links CF(0) to CF(1). It either transmits conformational changes from CF(0) into CF(1) or is implicated in proton conduction. This Pisum sativum (Garden pea) protein is ATP synthase delta chain, chloroplastic (ATPD).